The following is a 258-amino-acid chain: Deoxyribose-phosphate aldolase (258 aa).

Aspartate 102 serves as the catalytic Proton donor/acceptor. The active-site Schiff-base intermediate with acetaldehyde is the lysine 165. Lysine 199 (proton donor/acceptor) is an active-site residue.

This sequence belongs to the DeoC/FbaB aldolase family. DeoC type 2 subfamily.

The protein resides in the cytoplasm. It carries out the reaction 2-deoxy-D-ribose 5-phosphate = D-glyceraldehyde 3-phosphate + acetaldehyde. Its pathway is carbohydrate degradation; 2-deoxy-D-ribose 1-phosphate degradation; D-glyceraldehyde 3-phosphate and acetaldehyde from 2-deoxy-alpha-D-ribose 1-phosphate: step 2/2. Catalyzes a reversible aldol reaction between acetaldehyde and D-glyceraldehyde 3-phosphate to generate 2-deoxy-D-ribose 5-phosphate. This chain is Deoxyribose-phosphate aldolase, found in Aliivibrio fischeri (strain ATCC 700601 / ES114) (Vibrio fischeri).